The sequence spans 249 residues: Ribosomal RNA small subunit methyltransferase G (249 aa).

Gly86, Phe91, and Arg178 together coordinate S-adenosyl-L-methionine.

Belongs to the methyltransferase superfamily. RNA methyltransferase RsmG family.

Its subcellular location is the cytoplasm. Its function is as follows. Specifically methylates the N7 position of a guanine in 16S rRNA. The sequence is that of Ribosomal RNA small subunit methyltransferase G from Bifidobacterium adolescentis (strain ATCC 15703 / DSM 20083 / NCTC 11814 / E194a).